We begin with the raw amino-acid sequence, 817 residues long: Protein-glutamine gamma-glutamyltransferase K (817 aa).

Disordered regions lie at residues 1-38 (MMDG…SRRG) and 59-105 (DDWG…DGTI). Residues 1 to 100 (MMDGPRSDVG…VSRGSGVNAA (100 aa)) form a membrane anchorage region region. A compositionally biased stretch (pro residues) spans 17–26 (LQPPTTPSPE). Residue T22 is modified to Phosphothreonine. A phosphoserine mark is found at S24, S68, S82, S85, S92, and S95. A compositionally biased stretch (low complexity) spans 71 to 84 (RGSSSGTRRPGSRG). Active-site residues include C377, H436, and D459. 4 residues coordinate Ca(2+): N499, D501, E548, and E553. The interval 793-817 (GGFFSDAGGDSHLGETIPMASRGGA) is disordered.

This sequence belongs to the transglutaminase superfamily. Transglutaminase family. As to quaternary structure, interacts with PLAAT4. Ca(2+) is required as a cofactor. Palmitoylated. In terms of processing, the membrane anchorage region possesses a cluster of five cysteines within which fatty acid(s) may become thioester-linked. It is subject to phorbol ester-stimulated phosphorylation and is hypersensitive to proteolysis, which releases the enzyme in a soluble form. Post-translationally, tyrosine-phosphorylated.

It localises to the membrane. It catalyses the reaction L-glutaminyl-[protein] + L-lysyl-[protein] = [protein]-L-lysyl-N(6)-5-L-glutamyl-[protein] + NH4(+). Functionally, catalyzes the cross-linking of proteins and the conjugation of polyamines to proteins. Responsible for cross-linking epidermal proteins during formation of the stratum corneum. Involved in cell proliferation. In Homo sapiens (Human), this protein is Protein-glutamine gamma-glutamyltransferase K (TGM1).